The sequence spans 527 residues: Dual specificity protein kinase shkA (527 aa).

In terms of domain architecture, Protein kinase spans 45–304 (ITTESILGDG…GIVSELEEII (260 aa)). ATP is bound by residues 51–59 (LGDGSFGTV) and Lys72. Asp167 (proton acceptor) is an active-site residue. In terms of domain architecture, SH2 spans 424–513 (WFHGDISTSE…INTPCLGSRF (90 aa)).

This sequence belongs to the protein kinase superfamily. TKL Ser/Thr protein kinase family. SH2 domain-containing protein kinase subfamily.

It localises to the membrane. It carries out the reaction L-seryl-[protein] + ATP = O-phospho-L-seryl-[protein] + ADP + H(+). The enzyme catalyses L-threonyl-[protein] + ATP = O-phospho-L-threonyl-[protein] + ADP + H(+). Required for proper chemotaxis and phagocytosis; proper spatiotemporal control of F-actin levels in chemotaxing cells. Negative regulator of the PI3K (phosphatidylinositol 3 kinase) pathway. Predominantly phosphorylates serines and threonines and tyrosines at a lower level. The sequence is that of Dual specificity protein kinase shkA (shkA) from Dictyostelium discoideum (Social amoeba).